Consider the following 801-residue polypeptide: Phosphatidylinositol 4-phosphate 5-kinase 1 (801 aa).

A signal peptide spans 1 to 21 (MPGLHVVSFLVVLLLQLRSSG). MORN repeat units follow at residues 41 to 63 (YVGS…DGAL), 64 to 86 (YDGE…SGAS), 87 to 109 (YEGD…DGSV), 110 to 132 (YKGS…NSDT), 133 to 155 (YEGF…DGNV), 156 to 178 (YIGR…NGDT), 182 to 201 (NWLN…SGAC), and 202 to 223 (YIGT…PGSK). The PIPK domain occupies 366-797 (GHRSYYLMLN…RFISFLEKVF (432 aa)).

Expressed in young seedlings, shoot and seeds, and at lower level in roots, stem and leaf.

It catalyses the reaction a 1,2-diacyl-sn-glycero-3-phospho-(1D-myo-inositol 4-phosphate) + ATP = a 1,2-diacyl-sn-glycero-3-phospho-(1D-myo-inositol-4,5-bisphosphate) + ADP + H(+). Functionally, involved in flowering. May suppress floral initiation by modifying the expression of genes related to floral induction. The protein is Phosphatidylinositol 4-phosphate 5-kinase 1 (PIPK1) of Oryza sativa subsp. japonica (Rice).